Reading from the N-terminus, the 900-residue chain is MPQVDPELFDRGQFQAELALKSSPIAAFKKAIRQFREVLDNRFNSGRDIRRLIEDRAWCVDQILQQAWQRFDWGDDADIALVAVGGYGRGELHPYSDVDLLILLDSEDQESFREPIEGFLTLLWDIGLEVGQSVRSVQQCAEEARADLTVITTLMECRTICGPDSLRQRMLQVTGSAHMWPSKEFFLAKRHEQQRRHAKYNDTEYNLEPNVKGSPGGLRDIQTILWMARRQFGSLNLHALVREGFLVESECSMLASSQEFLWRVRYALHMLAGRAEDRLLFDHQRSIARLFGYEDNDVKLAVERFMQKYYRVVMAISELNDLIIQHFEEVILPCEQPVQIQPLNSRFQLRDGYIEVTHPNVFKRTPFALLEIFVLMAQHPEIKGVRADTIRLLRDSRHLIDDEFRHDIRNTSLFIELFKSSQGIHRNLRRMNRYGILGRYLPEFGHIIGQMQHDLFHIYTVDAHTLNLIKHLRKLNRPEMAEKYPLASKIIDRLPKPELIYIAGLYHDIAKGRGGDHSELGAVDAEAFCQSHQLPLWDTQLVSWLVQNHLVMSTTAQRKDLSDPQVIFDFAQLVGDQTHLDYLYVLTVADINATNPTLWNSWRASLLRQLYTETKRALRRGLENPVDREEQIRQTQTAALDQLVRNGIDQDDAEQLWSQLGDDYFLRHTAGDVAWHTEAILQHPDDGTPLVLIKETTQREFESGSQIFIYAADQHDFFAVTVAAMDQLNLSIQDARIITSTSQFTLDTYIVLDADGDSIGNNPERIAEIREGLIDALKNPDDYPTIIQRRVPRQLKHFAFAPQVTISTDALRQVSVLEVIAPDRPGLLARIGGIFLDFDLSVQNAKIATLGERVEDVFYITDARNQPLADPDLCKRLQAALVEQLSQDNGRDTLPTRINF.

Positions 1–342 (MPQVDPELFD…PCEQPVQIQP (342 aa)) are uridylyltransferase. A uridylyl-removing region spans residues 343–705 (LNSRFQLRDG…TTQREFESGS (363 aa)). Residues 461–583 (VDAHTLNLIK…VGDQTHLDYL (123 aa)) enclose the HD domain. ACT domains follow at residues 706 to 789 (QIFI…IIQR) and 816 to 891 (VLEV…DNGR).

The protein belongs to the GlnD family. It depends on Mg(2+) as a cofactor.

The enzyme catalyses [protein-PII]-L-tyrosine + UTP = [protein-PII]-uridylyl-L-tyrosine + diphosphate. It carries out the reaction [protein-PII]-uridylyl-L-tyrosine + H2O = [protein-PII]-L-tyrosine + UMP + H(+). Its activity is regulated as follows. Uridylyltransferase (UTase) activity is inhibited by glutamine, while glutamine activates uridylyl-removing (UR) activity. Functionally, modifies, by uridylylation and deuridylylation, the PII regulatory proteins (GlnB and homologs), in response to the nitrogen status of the cell that GlnD senses through the glutamine level. Under low glutamine levels, catalyzes the conversion of the PII proteins and UTP to PII-UMP and PPi, while under higher glutamine levels, GlnD hydrolyzes PII-UMP to PII and UMP (deuridylylation). Thus, controls uridylylation state and activity of the PII proteins, and plays an important role in the regulation of nitrogen assimilation and metabolism. The protein is Bifunctional uridylyltransferase/uridylyl-removing enzyme of Pseudomonas aeruginosa (strain ATCC 15692 / DSM 22644 / CIP 104116 / JCM 14847 / LMG 12228 / 1C / PRS 101 / PAO1).